The following is a 1198-amino-acid chain: Structural polyprotein (1198 aa).

An interaction with host EXOC1 region spans residues 2-15; sequence TKKPGGPGKNRAIN. Over 2 to 109 the chain is Cytoplasmic; sequence TKKPGGPGKN…RKQNKRGGNE (108 aa). Residues 37–72 form a hydrophobic; homodimerization of capsid protein C region; the sequence is LLDGRGPVRFVLALITFFKFTALAPTKALLGRWKAV. Positions 106–127 are cleaved as a propeptide — ER anchor for the capsid protein C, removed in mature form by serine protease NS3; it reads GGNEGSIMWLASLAVVIAYAGA. A helical membrane pass occupies residues 110 to 130; that stretch reads GSIMWLASLAVVIAYAGAMKL. Residues 131 to 253 are Extracellular-facing; it reads SNFQGKLLMT…ATRYLMKTEN (123 aa). N-linked (GlcNAc...) asparagine; by host glycosylation occurs at N142. A helical transmembrane segment spans residues 254–274; it reads WIIRNPGYAFLAATLGWMLGS. The Cytoplasmic segment spans residues 275–279; sequence NNGQR. The chain crosses the membrane as a helical span at residues 280–294; that stretch reads VVFTILLLLVAPAYS. The Extracellular segment spans residues 295–746; sequence FNCLGMGNRD…QVFGGAFRTL (452 aa). 6 cysteine pairs are disulfide-bonded: C297–C324, C354–C410, C354–C415, C368–C399, C386–C410, and C386–C415. The fusion peptide stretch occupies residues 392 to 405; that stretch reads DRGWGNGCGLFGKG. N448 is a glycosylation site (N-linked (GlcNAc...) asparagine; by host). 2 disulfides stabilise this stretch: C484–C581 and C598–C629. Residues 747–767 form a helical membrane-spanning segment; that stretch reads FGGMSWITQGLMGALLLWMGV. The Cytoplasmic portion of the chain corresponds to 768-773; the sequence is NARDRS. A helical membrane pass occupies residues 774 to 794; sequence IALAFLATGGVLVFLATNVHA. Residues 795-1198 are Extracellular-facing; that stretch reads DTGCAIDITR…CADAWGHHLH (404 aa). Disulfide bonds link C798–C809, C849–C937, C973–C1017, C1074–C1123, C1085–C1106, and C1107–C1110. Residues N924 and N1001 are each glycosylated (N-linked (GlcNAc...) asparagine; by host). The disordered stretch occupies residues 1152–1177; sequence VDPFSAGPSGDVSGHPGGPSQEVDGQ.

Homodimer. Interacts (via N-terminus) with host EXOC1 (via C-terminus); this interaction results in EXOC1 degradation through the proteasome degradation pathway. Interacts with host CAPRIN1; this interaction is involved in the suppression of the integrated stress response. As to quaternary structure, forms heterodimers with envelope protein E in the endoplasmic reticulum and Golgi. In terms of assembly, homodimer; in the endoplasmic reticulum and Golgi. Interacts with protein prM. Interacts with non-structural protein 1. Post-translationally, genome polyprotein: Specific enzymatic cleavages in vivo yield mature proteins. Cleavages in the lumen of endoplasmic reticulum are performed by host signal peptidase, whereas cleavages in the cytoplasmic side are performed by serine protease NS3. Signal cleavage at the 2K-4B site requires a prior NS3 protease-mediated cleavage at the 4A-2K site. Cleaved in post-Golgi vesicles by a host furin, releasing the mature small envelope protein M, and peptide pr. This cleavage is incomplete as up to 30% of viral particles still carry uncleaved prM. In terms of processing, N-glycosylated.

It is found in the secreted. Its subcellular location is the virion membrane. The protein localises to the host endoplasmic reticulum membrane. Its function is as follows. Plays a role in virus budding by binding to the cell membrane and gathering the viral RNA into a nucleocapsid that forms the core of a mature virus particle. During virus entry, may induce genome penetration into the host cytoplasm after hemifusion induced by the surface proteins. Can migrate to the cell nucleus where it modulates host functions. Overcomes the anti-viral effects of host EXOC1 by sequestering and degrading the latter through the proteasome degradation pathway. Inhibits the integrated stress response (ISR) in the infected cell by binding to host CAPRIN1. In terms of biological role, inhibits RNA silencing by interfering with host Dicer. Prevents premature fusion activity of envelope proteins in trans-Golgi by binding to envelope protein E at pH6.0. After virion release in extracellular space, gets dissociated from E dimers. Functionally, acts as a chaperone for envelope protein E during intracellular virion assembly by masking and inactivating envelope protein E fusion peptide. prM is the only viral peptide matured by host furin in the trans-Golgi network probably to avoid catastrophic activation of the viral fusion activity in acidic Golgi compartment prior to virion release. prM-E cleavage is inefficient, and many virions are only partially matured. These uncleaved prM would play a role in immune evasion. Its function is as follows. May play a role in virus budding. Exerts cytotoxic effects by activating a mitochondrial apoptotic pathway through M ectodomain. May display a viroporin activity. In terms of biological role, binds to host cell surface receptor and mediates fusion between viral and cellular membranes. Envelope protein is synthesized in the endoplasmic reticulum in the form of heterodimer with protein prM. They play a role in virion budding in the ER, and the newly formed immature particle is covered with 60 spikes composed of heterodimer between precursor prM and envelope protein E. The virion is transported to the Golgi apparatus where the low pH causes dissociation of PrM-E heterodimers and formation of E homodimers. prM-E cleavage is inefficient, and many virions are only partially matured. These uncleaved prM would play a role in immune evasion. May play a role in neuroinvasiveness. This is Structural polyprotein from Japanese encephalitis virus (strain Jaoars982) (JEV).